We begin with the raw amino-acid sequence, 298 residues long: Glycine--tRNA ligase alpha subunit (298 aa).

This sequence belongs to the class-II aminoacyl-tRNA synthetase family. Tetramer of two alpha and two beta subunits.

It localises to the cytoplasm. It catalyses the reaction tRNA(Gly) + glycine + ATP = glycyl-tRNA(Gly) + AMP + diphosphate. The protein is Glycine--tRNA ligase alpha subunit of Gloeothece citriformis (strain PCC 7424) (Cyanothece sp. (strain PCC 7424)).